Consider the following 396-residue polypeptide: MEFSQFKVNALMEITACPDLVFVRGQGSWLEDHAGKRYLDFVQGWAVNTLGHCAPEMKRALAEQADKLMNPSPAFYNLPSIELAQRLTSASCFDRVFFANSGAEANEGAIKLARKWGRVNRNGAYKIITMNHGFHGRTLATMSASGKPGWDTMFAPQVEGFPKAEINDLDSVRALIDAQTVAVMLEPVQGEAGVIPATREFMQGLRKLADEHGILFIVDEVQTGMGRTGSLFAYQQFDVIPDIMTLAKGIGGGIPLAALLAREEVCVFAHGDQGGTYNGNPLCAAVGVAVFDTITAPGFMEAAQARTRQLSEGLLALSAKRGLRGERGMGLLRALVLDRDDAPAIVEAARMLAPEGLLLNAPRGNLLRFMPALNVTEADMARMLEQLDGVIAAVRK.

Residues 102 to 103 (GA) and Phe-134 contribute to the pyridoxal 5'-phosphate site. Arg-137 is a binding site for N(2)-acetyl-L-ornithine. Position 219–222 (219–222 (DEVQ)) interacts with pyridoxal 5'-phosphate. At Lys-248 the chain carries N6-(pyridoxal phosphate)lysine. Thr-276 provides a ligand contact to pyridoxal 5'-phosphate.

It belongs to the class-III pyridoxal-phosphate-dependent aminotransferase family. ArgD subfamily. Homodimer. Requires pyridoxal 5'-phosphate as cofactor.

Its subcellular location is the cytoplasm. It catalyses the reaction N(2)-acetyl-L-ornithine + 2-oxoglutarate = N-acetyl-L-glutamate 5-semialdehyde + L-glutamate. It participates in amino-acid biosynthesis; L-arginine biosynthesis; N(2)-acetyl-L-ornithine from L-glutamate: step 4/4. This chain is Acetylornithine aminotransferase 2, found in Bordetella parapertussis (strain 12822 / ATCC BAA-587 / NCTC 13253).